Here is a 574-residue protein sequence, read N- to C-terminus: Cytochrome P450 4g15 (574 aa).

The segment at 288 to 327 (REREQNGGVDQTPSTAGSDEKDREKDKEKASPVAGLSYGQ) is disordered. The segment covering 295-304 (GVDQTPSTAG) has biased composition (polar residues). A compositionally biased stretch (basic and acidic residues) spans 305–317 (SDEKDREKDKEKA). The heme site is built by E379 and C519.

Belongs to the cytochrome P450 family. Heme serves as cofactor. As to expression, expressed in larval brain cortex cells and ring glands and weakly in larval digestive system and adult nervous system.

It localises to the endoplasmic reticulum membrane. The protein resides in the microsome membrane. Probably involved in steroid hormones biosynthesis. The sequence is that of Cytochrome P450 4g15 (Cyp4g15) from Drosophila melanogaster (Fruit fly).